The primary structure comprises 595 residues: MQSTSKYNCDSDYIAGRNYNTKRTNGREELSTGLTNEETGVVNISDENNIFFKKNIDYVKGSRIGKYKLIKTLGKGSCAKVVQAEDCETGEYVAIKIIERTPKQLSDIRIYREALICSLFNHPHIIKLLDFFHTTEYFFLIFEYVDGQQLYDIILNKGYLDEDEARKYFRQIISAVDYSHRNSVVHRDLKIENILIDRNDNIKLIDFGLSNFYDADDLLGTFCGSLYFAAPELLLGTRYTGPEIDVWSLGVILYVMLVGKVPFDDENIHALQNKIKSCKFKFEKTISPEAQDLITNMILSSDARINLENVKKSKWTNLGYKNLTNNFMTLRKPIIEINKNILRALQAAMFFQFTDMERVLMQYLQICKGDKHSLEQTYWCKKPVVILYYLTMEKFNELNYKSIPIDIDTGMNTKSLIDITIEKQPIIIYNFVRFTNAKKNNNPYNLFFSRSVFEPEMEFLNMTKDVSLDSCNISEDENKKHNFPKIKQSIIKGLFKGIKIKNGDKDYVKNAIIKILLDLDITYEANEKSYFCSYSHSGVECHFKIDLYFNILLLEHYVVLNCLNRKKDNFKLVTELIKEKLEEIGDTSNYPENAI.

The Protein kinase domain maps to 67–316 (YKLIKTLGKG…LENVKKSKWT (250 aa)). ATP contacts are provided by residues 73-81 (LGKGSCAKV) and lysine 96. The active-site Proton acceptor is the aspartate 188.

Belongs to the protein kinase superfamily. CAMK Ser/Thr protein kinase family. NIM1 subfamily.

It localises to the cytoplasm. It is found in the cell membrane. It catalyses the reaction L-seryl-[protein] + ATP = O-phospho-L-seryl-[protein] + ADP + H(+). It carries out the reaction L-threonyl-[protein] + ATP = O-phospho-L-threonyl-[protein] + ADP + H(+). In terms of biological role, serine/threonine protein kinase involved in regulation of exocytosis. This Enterocytozoon bieneusi (strain H348) (Microsporidian parasite) protein is Probable serine/threonine-protein kinase KIN1 homolog (KIN1).